The following is a 436-amino-acid chain: Histidinol dehydrogenase (436 aa).

The NAD(+) site is built by tyrosine 135, glutamine 196, and asparagine 219. 3 residues coordinate substrate: serine 242, glutamine 264, and histidine 267. Zn(2+) contacts are provided by glutamine 264 and histidine 267. Residues glutamate 332 and histidine 333 each act as proton acceptor in the active site. Substrate contacts are provided by histidine 333, aspartate 366, glutamate 420, and histidine 425. Residue aspartate 366 participates in Zn(2+) binding. Zn(2+) is bound at residue histidine 425.

The protein belongs to the histidinol dehydrogenase family. Zn(2+) serves as cofactor.

It catalyses the reaction L-histidinol + 2 NAD(+) + H2O = L-histidine + 2 NADH + 3 H(+). It participates in amino-acid biosynthesis; L-histidine biosynthesis; L-histidine from 5-phospho-alpha-D-ribose 1-diphosphate: step 9/9. Catalyzes the sequential NAD-dependent oxidations of L-histidinol to L-histidinaldehyde and then to L-histidine. The polypeptide is Histidinol dehydrogenase (Methylococcus capsulatus (strain ATCC 33009 / NCIMB 11132 / Bath)).